We begin with the raw amino-acid sequence, 388 residues long: Regulator of G-protein signaling 20 (388 aa).

A disordered region spans residues 138-199 (PGRPSGGRPL…TPGAAPGQPG (62 aa)). Residues 185 to 197 (PAAQDTPGAAPGQ) are compositionally biased toward low complexity. An RGS domain is found at 262-378 (SFDKLMVTPA…MNSAVYKDLL (117 aa)).

Forms a complex with G(alpha)z/i2 subunits and mu-opioid receptors; the formation of this complex results in mu-opioid receptor desensitization. Interacts with OPRM1. Post-translationally, fatty acylated. Heavily palmitoylated in the cysteine string motif. In terms of processing, N- and O-glycosylated in synapsomal membranes. Serine phosphorylated in synapsomal membranes. Post-translationally, sumoylated with SUMO1 and SUMO2 in synaptosomes. The sumoylated forms act as a scaffold for sequestering mu-opioid receptor-activated G(alpha) subunits. In terms of tissue distribution, isoform 5 is expressed in brain at high levels in the caudate nucleus and temporal lobe.

The protein localises to the membrane. It is found in the nucleus. It localises to the cytoplasm. Inhibits signal transduction by increasing the GTPase activity of G protein alpha subunits thereby driving them into their inactive GDP-bound form. Binds selectively to G(z)-alpha and G(alpha)-i2 subunits, accelerates their GTPase activity and regulates their signaling activities. The G(z)-alpha activity is inhibited by the phosphorylation and palmitoylation of the G-protein. Negatively regulates mu-opioid receptor-mediated activation of the G-proteins. This is Regulator of G-protein signaling 20 (RGS20) from Homo sapiens (Human).